The chain runs to 556 residues: Urocanate hydratase (556 aa).

Residues 52–53 (GG), Gln130, 176–178 (GMG), Glu196, Arg201, 242–243 (NA), 263–267 (QTSAH), 273–274 (YL), and Tyr322 contribute to the NAD(+) site. Cys410 is an active-site residue. Gly492 contributes to the NAD(+) binding site.

It belongs to the urocanase family. The cofactor is NAD(+).

Its subcellular location is the cytoplasm. The enzyme catalyses 4-imidazolone-5-propanoate = trans-urocanate + H2O. Its pathway is amino-acid degradation; L-histidine degradation into L-glutamate; N-formimidoyl-L-glutamate from L-histidine: step 2/3. Its function is as follows. Catalyzes the conversion of urocanate to 4-imidazolone-5-propionate. The chain is Urocanate hydratase from Shewanella sp. (strain ANA-3).